We begin with the raw amino-acid sequence, 258 residues long: Snake venom serine protease CL2 (258 aa).

A signal peptide spans 1 to 18; the sequence is MVLIRVLANLLIIQLSYA. The propeptide occupies 19 to 24; sequence QKSSEL. Positions 25–249 constitute a Peptidase S1 domain; that stretch reads VIGGDECNIN…YTDWIKSIIA (225 aa). 6 disulfides stabilise this stretch: cysteine 31-cysteine 163, cysteine 50-cysteine 66, cysteine 98-cysteine 256, cysteine 142-cysteine 210, cysteine 174-cysteine 189, and cysteine 200-cysteine 225. Asparagine 44 is a glycosylation site (N-linked (GlcNAc...) asparagine). Residue histidine 65 is the Charge relay system of the active site. The N-linked (GlcNAc...) asparagine glycan is linked to asparagine 103. The active-site Charge relay system is aspartate 110. N-linked (GlcNAc...) asparagine glycosylation occurs at asparagine 121. The active-site Charge relay system is the serine 204. N-linked (GlcNAc...) asparagine glycosylation occurs at asparagine 251.

It belongs to the peptidase S1 family. Snake venom subfamily. In terms of assembly, monomer. In terms of tissue distribution, expressed by the venom gland.

It is found in the secreted. Functionally, snake venom serine protease that may act in the hemostasis system of the prey. This chain is Snake venom serine protease CL2, found in Trimeresurus stejnegeri (Chinese green tree viper).